A 177-amino-acid polypeptide reads, in one-letter code: Adenine phosphoribosyltransferase (177 aa).

Belongs to the purine/pyrimidine phosphoribosyltransferase family. In terms of assembly, homodimer.

Its subcellular location is the cytoplasm. It catalyses the reaction AMP + diphosphate = 5-phospho-alpha-D-ribose 1-diphosphate + adenine. The protein operates within purine metabolism; AMP biosynthesis via salvage pathway; AMP from adenine: step 1/1. Its function is as follows. Catalyzes a salvage reaction resulting in the formation of AMP, that is energically less costly than de novo synthesis. The protein is Adenine phosphoribosyltransferase of Synechococcus sp. (strain RCC307).